The sequence spans 529 residues: Aldehyde dehydrogenase 1 (529 aa).

251 to 256 is an NAD(+) binding site; that stretch reads GSTYVG. Residues glutamate 273 and cysteine 307 contribute to the active site.

It belongs to the aldehyde dehydrogenase family.

It carries out the reaction an aldehyde + NAD(+) + H2O = a carboxylate + NADH + 2 H(+). This Entamoeba histolytica (strain ATCC 30459 / HM-1:IMSS / ABRM) protein is Aldehyde dehydrogenase 1.